Reading from the N-terminus, the 295-residue chain is Bifunctional protein FolD (295 aa).

Residues glycine 166–serine 168, serine 191, and isoleucine 232 contribute to the NADP(+) site.

This sequence belongs to the tetrahydrofolate dehydrogenase/cyclohydrolase family. In terms of assembly, homodimer.

The enzyme catalyses (6R)-5,10-methylene-5,6,7,8-tetrahydrofolate + NADP(+) = (6R)-5,10-methenyltetrahydrofolate + NADPH. It carries out the reaction (6R)-5,10-methenyltetrahydrofolate + H2O = (6R)-10-formyltetrahydrofolate + H(+). Its pathway is one-carbon metabolism; tetrahydrofolate interconversion. Its function is as follows. Catalyzes the oxidation of 5,10-methylenetetrahydrofolate to 5,10-methenyltetrahydrofolate and then the hydrolysis of 5,10-methenyltetrahydrofolate to 10-formyltetrahydrofolate. The protein is Bifunctional protein FolD of Rhodopseudomonas palustris (strain BisB18).